The chain runs to 582 residues: A-type ATP synthase subunit A 1 (582 aa).

Position 231–238 (231–238) interacts with ATP; it reads GPFGSGKT.

The protein belongs to the ATPase alpha/beta chains family. In terms of assembly, has multiple subunits with at least A(3), B(3), C, D, E, F, H, I and proteolipid K(x).

Its subcellular location is the cell membrane. It catalyses the reaction ATP + H2O + 4 H(+)(in) = ADP + phosphate + 5 H(+)(out). In terms of biological role, component of the A-type ATP synthase that produces ATP from ADP in the presence of a proton gradient across the membrane. The A chain is the catalytic subunit. The polypeptide is A-type ATP synthase subunit A 1 (Methanospirillum hungatei JF-1 (strain ATCC 27890 / DSM 864 / NBRC 100397 / JF-1)).